The sequence spans 382 residues: Lipid-A-disaccharide synthase (382 aa).

This sequence belongs to the LpxB family.

It catalyses the reaction 2-N,3-O-bis[(3R)-3-hydroxytetradecanoyl]-alpha-D-glucosaminyl 1-phosphate + UDP-2-N,3-O-bis[(3R)-3-hydroxytetradecanoyl]-alpha-D-glucosamine = lipid A disaccharide (E. coli) + UDP + H(+). It carries out the reaction a lipid X + a UDP-2-N,3-O-bis[(3R)-3-hydroxyacyl]-alpha-D-glucosamine = a lipid A disaccharide + UDP + H(+). It participates in glycolipid biosynthesis; lipid IV(A) biosynthesis; lipid IV(A) from (3R)-3-hydroxytetradecanoyl-[acyl-carrier-protein] and UDP-N-acetyl-alpha-D-glucosamine: step 5/6. Its function is as follows. Condensation of UDP-2,3-diacylglucosamine and 2,3-diacylglucosamine-1-phosphate to form lipid A disaccharide, a precursor of lipid A, a phosphorylated glycolipid that anchors the lipopolysaccharide to the outer membrane of the cell. The protein is Lipid-A-disaccharide synthase of Escherichia coli O157:H7.